We begin with the raw amino-acid sequence, 636 residues long: MPMITITLPDGSRREFDAPVSVMQVAQSIGAGLAKATIAGQVDGQLVDASDLIEHDASLRIITAKDAEGVEIIRHSCAHLVGHAVKQLYPDVKMVIGPVIAEGFYYDIYSERPFTPEDMAAIEQRMQQLIAQDYDVIKKVTPRAEVIEVFAQRGEEYKLRLIEDMSDDITAMGLYYHQEYVDMCRGPHVPNTRFLKAFKLTRISGAYWRGDAKNEQLQRIYGTAWADKKQLDAYILRMEEADKRDHRKIGKAQDLFHLQEEAPGLVFWHPKGWSLWQVVEQYMRKVYRDSGYGEVRCPQILDVSLWQKSGHWDNYQDAMFFTESEKRTYAVKPMNCPGHVQVFNQGLHSYRDLPIRYGEFGACHRNEPSGALHGILRVRGFTQDDGHVFCLESQIEAEVTAFHQQALAVYTAFGFDDIQIKIALRPEKRLGDDATWDKAEAALRSALGVCGVEWQELPGEGAFYGPKIEYHLKDAIGRTWQLGTMQVDFMMPGRLGAEYVDEHSQKKHPVMLHRAIVGSMERFIGILIEHHAGAFPAWLAPVQVVVANITDAQAEYVDSVRKTLANQGFRVSADLRNEKIGYKIREHTLQRVPYLLVVGDREKENGAVAVRTRSGEDLGTMTVSAFIERLQAEQAA.

Residues 1–63 (MPMITITLPD…EHDASLRIIT (63 aa)) enclose the TGS domain. Residues 245-536 (DHRKIGKAQD…LIEHHAGAFP (292 aa)) are catalytic. Zn(2+)-binding residues include Cys-336, His-387, and His-513.

It belongs to the class-II aminoacyl-tRNA synthetase family. In terms of assembly, homodimer. The cofactor is Zn(2+).

The protein resides in the cytoplasm. It catalyses the reaction tRNA(Thr) + L-threonine + ATP = L-threonyl-tRNA(Thr) + AMP + diphosphate + H(+). Functionally, catalyzes the attachment of threonine to tRNA(Thr) in a two-step reaction: L-threonine is first activated by ATP to form Thr-AMP and then transferred to the acceptor end of tRNA(Thr). Also edits incorrectly charged L-seryl-tRNA(Thr). The protein is Threonine--tRNA ligase of Xanthomonas campestris pv. campestris (strain 8004).